The chain runs to 237 residues: Ribonuclease PH (237 aa).

Phosphate contacts are provided by residues arginine 86 and glycine 124–arginine 126.

This sequence belongs to the RNase PH family. In terms of assembly, homohexameric ring arranged as a trimer of dimers.

It carries out the reaction tRNA(n+1) + phosphate = tRNA(n) + a ribonucleoside 5'-diphosphate. Its function is as follows. Phosphorolytic 3'-5' exoribonuclease that plays an important role in tRNA 3'-end maturation. Removes nucleotide residues following the 3'-CCA terminus of tRNAs; can also add nucleotides to the ends of RNA molecules by using nucleoside diphosphates as substrates, but this may not be physiologically important. Probably plays a role in initiation of 16S rRNA degradation (leading to ribosome degradation) during starvation. This is Ribonuclease PH from Shewanella sp. (strain W3-18-1).